We begin with the raw amino-acid sequence, 366 residues long: Alanine racemase (366 aa).

K40 serves as the catalytic Proton acceptor; specific for D-alanine. K40 bears the N6-(pyridoxal phosphate)lysine mark. R136 is a binding site for substrate. The Proton acceptor; specific for L-alanine role is filled by Y263. M310 contributes to the substrate binding site.

This sequence belongs to the alanine racemase family. Pyridoxal 5'-phosphate serves as cofactor.

It carries out the reaction L-alanine = D-alanine. Its pathway is amino-acid biosynthesis; D-alanine biosynthesis; D-alanine from L-alanine: step 1/1. Functionally, catalyzes the interconversion of L-alanine and D-alanine. May also act on other amino acids. This is Alanine racemase (alr) from Streptococcus equi subsp. equi (strain 4047).